Here is a 506-residue protein sequence, read N- to C-terminus: MGTPIKASLLALFLFFLLSPTAFSVSNGGLLRVGLKKRKVDRLDQLRAHGVHMLGNARKDFGFRRTLSDSGSGIVALTNDRDTAYYGEIGIGTPPQNFAVIFDTGSSDLWVPSTKCDTSLACVIHPRYDSGDSSTYKGNGTTASIQYGTGAIVGFYSQDSVEVGDLVVEHQDFIETTEEDDTVFLKSEFDGILGLGFQEISAGKAVPVWYNMVNQGLVEEAVFSFWLNRNVDEEEGGELVFGGVDPNHFRGNHTYVPVTRKGYWQFEMGDVLIGDKSSGFCAGGCAAIADSGTSFFAGPTAIITQINQAIGAKGVLNQQCKTLVGQYGKNMIQMLTSEVQPDKICSHMKLCTFDGAHDVRSMIESVVDKNNDKSSGGEICTFCEMALVRMQNEIKRNETEDNIINHVNEVCDQLPTSSAESIVDCNGISSMPNIAFTIGSKLFEVTPEQYIYKVGEGEAATCISGFTALDIMSPQGPIWILGDMFMGPYHTVFDYGKLRVGFAEAV.

An N-terminal signal peptide occupies residues methionine 1–serine 24. A propeptide spanning residues valine 25–serine 70 is cleaved from the precursor. The Peptidase A1 domain maps to tyrosine 85–alanine 503. Residue aspartate 103 is part of the active site. The cysteines at positions 116 and 122 are disulfide-linked. Asparagine 139 and asparagine 252 each carry an N-linked (GlcNAc...) asparagine glycan. A disulfide bridge links cysteine 281 with cysteine 285. Aspartate 290 is a catalytic residue. Positions valine 315 to serine 417 constitute a Saposin B-type domain. Intrachain disulfides connect cysteine 320–cysteine 411, cysteine 345–cysteine 383, cysteine 351–cysteine 380, and cysteine 425–cysteine 462. N-linked (GlcNAc...) asparagine glycosylation is present at asparagine 397.

Belongs to the peptidase A1 family. As to quaternary structure, heterodimer of a light chain and a heavy chain. An intermediate form is produced first, and undergoes proteolytic processing to remove the internal plant-specific insert (PSI) and the propeptide. Detected in pistils, but not in seeds, bracts, midribs, roots, leaves or stamen extracts. Detected in seeds. In stigmas and styles, detected in the transmitting tissue and in contiguous subepidermal layers at the longitudenal grooves of the stigma (at protein level).

Its subcellular location is the microsome membrane. The protein localises to the protein storage vacuole. It localises to the secreted. It is found in the cell wall. The protein resides in the extracellular space. Its subcellular location is the extracellular matrix. Its activity is regulated as follows. Inhibited by the specific aspartic proteinase inhibitors diazoacetyl-noleucine methyl ester and pepstatin. Aspartic protease. Cleaves alpha-lactalbumin but not beta-lactoglobulin. The polypeptide is Procardosin-B (Cynara cardunculus (Cardoon)).